The chain runs to 484 residues: Probable endopeptidase p60 (484 aa).

Positions 1–27 are cleaved as a signal peptide; sequence MNMKKATIAATAGIAVTAFAAPTIASA. A LysM 1 domain is found at 28–71; that stretch reads STVVVEAGDTLWGIAQSKGTTVDAIKKANNLTTDKIVPGQKLQV. An SH3b domain is found at 80–144; the sequence is KTEKSVSATW…VNGKYLTDKA (65 aa). The tract at residues 150–192 is disordered; the sequence is APTQEVKKETTTQQAAPAAETKTEVKQTTQATTPAPKVAETKE. Low complexity predominate over residues 160-169; sequence TTQQAAPAAE. A LysM 2 domain is found at 201 to 244; it reads TTHAVKSGDTIWALSVKYGVSVQDIMSWNNLSSSSIYVGQKLAI. Residues 254–367 form a disordered region; that stretch reads KAEVKTEAPA…QGSSNNNSNS (114 aa). 2 stretches are compositionally biased toward low complexity: residues 273–282 and 289–367; these read KENTNTNTAT and ATQQ…NSNS. The tract at residues 311-355 is 19 X 2 AA tandem repeats of T-N; sequence TNTNANKTNTNTNTNTNTNNTNTNTPSKNTNTNSNTNTNTNSNTN. One can recognise a NlpC/P60 domain in the interval 366-484; it reads NSSASAIIAE…GKYLVGFGRV (119 aa). C396 acts as the Nucleophile in catalysis. The Proton acceptor role is filled by H446. N458 is an active-site residue.

It belongs to the peptidase C40 family.

Its subcellular location is the cell surface. It is found in the secreted. In terms of biological role, this major extracellular protein may be involved in the invasion of non-professional phagocytic cells by Listeria. The sequence is that of Probable endopeptidase p60 (iap) from Listeria monocytogenes serovar 1/2a (strain ATCC BAA-679 / EGD-e).